We begin with the raw amino-acid sequence, 463 residues long: Chromosomal replication initiator protein DnaA (463 aa).

The domain I, interacts with DnaA modulators stretch occupies residues 1 to 83 (MSTNQIILTD…LQLFQHYNNT (83 aa)). Residues 83-124 (TIKSIEIITKELPGTTQTVTELPTKTFADIGSSELNSENIFS) form a domain II region. A domain III, AAA+ region region spans residues 125 to 343 (TLDVRFTFDN…GALNKVIAHS (219 aa)). Residues glycine 171, glycine 173, lysine 174, and threonine 175 each coordinate ATP. The domain IV, binds dsDNA stretch occupies residues 344–463 (NFTLKEITLE…INLLMKILQN (120 aa)).

Belongs to the DnaA family. In terms of assembly, oligomerizes as a right-handed, spiral filament on DNA at oriC.

It is found in the cytoplasm. Plays an essential role in the initiation and regulation of chromosomal replication. ATP-DnaA binds to the origin of replication (oriC) to initiate formation of the DNA replication initiation complex once per cell cycle. Binds the DnaA box (a 9 base pair repeat at the origin) and separates the double-stranded (ds)DNA. Forms a right-handed helical filament on oriC DNA; dsDNA binds to the exterior of the filament while single-stranded (ss)DNA is stabiized in the filament's interior. The ATP-DnaA-oriC complex binds and stabilizes one strand of the AT-rich DNA unwinding element (DUE), permitting loading of DNA polymerase. After initiation quickly degrades to an ADP-DnaA complex that is not apt for DNA replication. Binds acidic phospholipids. In Rickettsia conorii (strain ATCC VR-613 / Malish 7), this protein is Chromosomal replication initiator protein DnaA.